Reading from the N-terminus, the 244-residue chain is Probable fimbrial assembly protein FimC, serogroup H1 (244 aa).

The chain is Probable fimbrial assembly protein FimC, serogroup H1 (fimC) from Dichelobacter nodosus (Bacteroides nodosus).